The sequence spans 195 residues: Chromophore lyase CpcT/CpeT 2 (195 aa).

This sequence belongs to the CpcT/CpeT biliprotein lyase family.

Functionally, covalently attaches a chromophore to Cys residue(s) of phycobiliproteins. In Trichodesmium erythraeum (strain IMS101), this protein is Chromophore lyase CpcT/CpeT 2.